A 291-amino-acid polypeptide reads, in one-letter code: G1/S-specific cyclin-D2 (291 aa).

The tract at residues 264–291 is disordered; that stretch reads QQQQSNPSKTIEELDQASTPTDVRDINL. Position 282 is a phosphothreonine (Thr282).

Belongs to the cyclin family. Cyclin D subfamily. As to quaternary structure, interacts with the CDK4 and CDK6 protein kinases to form a serine/threonine kinase holoenzyme complex. The cyclin subunit imparts substrate specificity to the complex. In terms of processing, phosphorylation at Thr-282 by MAP kinases is required for ubiquitination and degradation by the DCX(AMBRA1) complex. Ubiquitinated by the DCX(AMBRA1) complex during the transition from G1 to S cell phase, leading to its degradation: ubiquitination is dependent on Thr-282 phosphorylation. The DCX(AMBRA1) complex represents the major regulator of CCND2 stability during the G1/S transition.

The protein localises to the nucleus. It localises to the cytoplasm. Its subcellular location is the nucleus membrane. Regulatory component of the cyclin D2-CDK4 (DC) complex that phosphorylates and inhibits members of the retinoblastoma (RB) protein family including RB1 and regulates the cell-cycle during G(1)/S transition. Phosphorylation of RB1 allows dissociation of the transcription factor E2F from the RB/E2F complex and the subsequent transcription of E2F target genes which are responsible for the progression through the G(1) phase. Hypophosphorylates RB1 in early G(1) phase. Cyclin D-CDK4 complexes are major integrators of various mitogenenic and antimitogenic signals. The chain is G1/S-specific cyclin-D2 (CCND2) from Gallus gallus (Chicken).